Consider the following 481-residue polypeptide: F-box/LRR-repeat protein At3g03360 (481 aa).

Positions 1-28 (MEKESQENSTRPDASSTVFSSSKSTCAS) are disordered. Low complexity predominate over residues 14–28 (ASSTVFSSSKSTCAS). The F-box domain maps to 36 to 84 (GDLISRLPDDILQLILSYLPTRLAIKTSVLSRRWRHVWSDTWSLSFHRD). 5 LRR repeats span residues 118 to 145 (SRPD…SLYL), 196 to 221 (HCNI…LLFF), 295 to 320 (EADF…TLGA), 350 to 375 (ISRY…TIHP), and 413 to 439 (RRNV…ELIV).

This Arabidopsis thaliana (Mouse-ear cress) protein is F-box/LRR-repeat protein At3g03360.